We begin with the raw amino-acid sequence, 1155 residues long: DNA-directed RNA polymerase subunit beta (1155 aa).

This sequence belongs to the RNA polymerase beta chain family. In terms of assembly, the RNAP catalytic core consists of 2 alpha, 1 beta, 1 beta' and 1 omega subunit. When a sigma factor is associated with the core the holoenzyme is formed, which can initiate transcription.

It carries out the reaction RNA(n) + a ribonucleoside 5'-triphosphate = RNA(n+1) + diphosphate. Functionally, DNA-dependent RNA polymerase catalyzes the transcription of DNA into RNA using the four ribonucleoside triphosphates as substrates. The polypeptide is DNA-directed RNA polymerase subunit beta (Borrelia recurrentis (strain A1)).